The chain runs to 240 residues: MORN repeat-containing protein 3 (240 aa).

Residues 6–35 (CPKKSESLWKGWDRKAQKNGLRRQVYAVNG) form an interaction with MDM2 region. MORN repeat units follow at residues 38–60 (YVGE…KNGA), 62–84 (YEGD…DQQT), 91–113 (YSGW…PKEY), 114–136 (YEGE…NGDI), 137–159 (YEGQ…NGNR), 160–182 (YEGC…DHGQ), and 184–205 (FEGF…GRDE). The segment at 76 to 100 (TLSLPDQQTGKCRRVYSGWWKGDKK) is interaction with SIRT1. Residues 206-240 (APEPTQFPIPEVKILDPDGVLAQALAMFKKTEEGD) form an interaction with TP53 region.

In terms of assembly, interacts with MEIG1. Interacts with TP53, MDM2 and SIRT1; the interactions mediate post-transcriptional modifications of TP53 by MDM2 and SIRT1.

Its subcellular location is the cytoplasmic vesicle. It localises to the secretory vesicle. The protein resides in the acrosome. Assembles a suppression complex (suppresome) by tethering SIRT1 and MDM2 to regulate composite modifications of p53/TP53. Confers both deacetylation-mediated functional inactivation, by SIRT1, and ubiquitination-dependent degradation, by MDM2, of p53/TP53, promoting a proliferative and cell survival behaviors. May play a role in the regulation of spermatogenesis. The protein is MORN repeat-containing protein 3 (MORN3) of Macaca fascicularis (Crab-eating macaque).